The chain runs to 113 residues: Ribosome-associated factor Y (113 aa).

At K66 the chain carries N6-acetyllysine. Residues 91-113 form a disordered region; that stretch reads KGEARRAATSVKDANFVEEVEEE.

It belongs to the HPF/YfiA ribosome-associated protein family. YfiA subfamily. Associates mainly with 70S ribosomes.

During stationary phase, prevents 70S dimer formation, probably in order to regulate translation efficiency during transition between the exponential and the stationary phases. In addition, during environmental stress such as cold shock or excessive cell density at stationary phase, stabilizes the 70S ribosome against dissociation, inhibits translation initiation and increase translation accuracy. When normal growth conditions are restored, is quickly released from the ribosome. This is Ribosome-associated factor Y from Escherichia coli O157:H7.